Here is a 321-residue protein sequence, read N- to C-terminus: L-carnitine dehydrogenase (321 aa).

7–12 (GTGVIG) provides a ligand contact to NAD(+).

This sequence belongs to the 3-hydroxyacyl-CoA dehydrogenase family. L-carnitine dehydrogenase subfamily. In terms of assembly, homodimer.

It localises to the cytoplasm. It carries out the reaction carnitine + NAD(+) = 3-dehydrocarnitine + NADH + H(+). It functions in the pathway amine and polyamine metabolism; carnitine metabolism. Its function is as follows. Catalyzes the NAD(+)-dependent oxidation of L-carnitine to 3-dehydrocarnitine. This chain is L-carnitine dehydrogenase, found in Staphylococcus epidermidis (strain ATCC 12228 / FDA PCI 1200).